Consider the following 356-residue polypeptide: Replication-associated protein (356 aa).

The 109-residue stretch at 8-116 (RVQAKNYFLT…DGDTAEWGEF (109 aa)) folds into the CRESS-DNA virus Rep endonuclease domain. The RCR-1 signature appears at 15–18 (FLTY). Residues Glu-49, His-57, and His-59 each contribute to the a divalent metal cation site. The RCR-2 signature appears at 57 to 59 (HLH). The active-site For DNA cleavage activity is the Tyr-103. Positions 103 to 106 (YIDK) match the RCR-3 motif. Position 107 (Asp-107) interacts with a divalent metal cation. The tract at residues 143–153 (VQSALNILKEE) is binding to RBR1. An oligomerization region spans residues 156–176 (KDYVLQNHNIRSNLERIFAKA). 221-228 (EGDSRTGK) contacts ATP.

Belongs to the geminiviridae Rep protein family. As to quaternary structure, homooligomer. Interacts with the replication enhancer protein (REn). Interacts with host retinoblastoma-related protein 1 (RBR1), and may thereby induce the transcription of host replicative enzymes even if the cell is not dividing anymore. Interacts with host PCNA. Interacts with host SCE1 protein. It depends on Mg(2+) as a cofactor. Mn(2+) serves as cofactor.

The protein localises to the host nucleus. In terms of biological role, essential for the replication of viral ssDNA. The closed circular ssDNA genome is first converted to a superhelical dsDNA. Rep binds a specific region at the genome origin of replication. It introduces an endonucleolytic nick within the conserved sequence 5'-TAATATTAC-3' in the intergenic region of the genome present in all geminiviruses, thereby initiating the rolling circle replication (RCR). Following cleavage, binds covalently to the 5'-phosphate of DNA as a tyrosyl ester. The cleavage gives rise to a free 3'-OH that serves as a primer for the cellular DNA polymerase. The polymerase synthesizes the (+) strand DNA by rolling circle mechanism. After one round of replication, a Rep-catalyzed nucleotidyl transfer reaction releases a circular single-stranded virus genome, thereby terminating the replication. Displays origin-specific DNA cleavage, nucleotidyl transferase, ATPase and helicase activities. This Abutilon (Upland cotton) protein is Replication-associated protein.